Here is a 221-residue protein sequence, read N- to C-terminus: Translation initiation factor 6 (221 aa).

This sequence belongs to the eIF-6 family.

Its function is as follows. Binds to the 50S ribosomal subunit and prevents its association with the 30S ribosomal subunit to form the 70S initiation complex. This chain is Translation initiation factor 6, found in Methanosphaerula palustris (strain ATCC BAA-1556 / DSM 19958 / E1-9c).